The sequence spans 167 residues: HVA22-like protein b (167 aa).

A run of 3 helical transmembrane segments spans residues 18-38, 47-67, and 68-88; these read VIAG…RAIE, QWLT…TFFR, and LLEW…WLVL.

Belongs to the DP1 family. Predominantly expressed in flower buds.

The protein resides in the membrane. The chain is HVA22-like protein b (HVA22B) from Arabidopsis thaliana (Mouse-ear cress).